A 31-amino-acid polypeptide reads, in one-letter code: Cytochrome b6-f complex subunit 6 (31 aa).

The helical transmembrane segment at 3–23 threads the bilayer; sequence TLTSYFGFLLVALTITLVLFI.

The protein belongs to the PetL family. As to quaternary structure, the 4 large subunits of the cytochrome b6-f complex are cytochrome b6, subunit IV (17 kDa polypeptide, PetD), cytochrome f and the Rieske protein, while the 4 small subunits are PetG, PetL, PetM and PetN. The complex functions as a dimer.

The protein localises to the plastid. The protein resides in the chloroplast thylakoid membrane. Component of the cytochrome b6-f complex, which mediates electron transfer between photosystem II (PSII) and photosystem I (PSI), cyclic electron flow around PSI, and state transitions. PetL is important for photoautotrophic growth as well as for electron transfer efficiency and stability of the cytochrome b6-f complex. The polypeptide is Cytochrome b6-f complex subunit 6 (Populus alba (White poplar)).